The primary structure comprises 392 residues: Formate-dependent phosphoribosylglycinamide formyltransferase (392 aa).

N(1)-(5-phospho-beta-D-ribosyl)glycinamide contacts are provided by residues 22–23 and Glu82; that span reads EL. Residues Arg114, Lys155, 160–165, 195–198, and Glu203 each bind ATP; these read SSGKGQ and EKII. The ATP-grasp domain occupies 119–308; it reads VLVSKKLNIL…EFALHVRSFL (190 aa). Mg(2+) is bound by residues Glu267 and Glu279. Residues Asp286, Lys355, and 362 to 363 contribute to the N(1)-(5-phospho-beta-D-ribosyl)glycinamide site; that span reads RR.

It belongs to the PurK/PurT family. In terms of assembly, homodimer.

It carries out the reaction N(1)-(5-phospho-beta-D-ribosyl)glycinamide + formate + ATP = N(2)-formyl-N(1)-(5-phospho-beta-D-ribosyl)glycinamide + ADP + phosphate + H(+). The protein operates within purine metabolism; IMP biosynthesis via de novo pathway; N(2)-formyl-N(1)-(5-phospho-D-ribosyl)glycinamide from N(1)-(5-phospho-D-ribosyl)glycinamide (formate route): step 1/1. Involved in the de novo purine biosynthesis. Catalyzes the transfer of formate to 5-phospho-ribosyl-glycinamide (GAR), producing 5-phospho-ribosyl-N-formylglycinamide (FGAR). Formate is provided by PurU via hydrolysis of 10-formyl-tetrahydrofolate. In Wigglesworthia glossinidia brevipalpis, this protein is Formate-dependent phosphoribosylglycinamide formyltransferase.